Here is a 117-residue protein sequence, read N- to C-terminus: Large ribosomal subunit protein bL20 (117 aa).

The protein belongs to the bacterial ribosomal protein bL20 family.

Its function is as follows. Binds directly to 23S ribosomal RNA and is necessary for the in vitro assembly process of the 50S ribosomal subunit. It is not involved in the protein synthesizing functions of that subunit. The polypeptide is Large ribosomal subunit protein bL20 (Histophilus somni (strain 129Pt) (Haemophilus somnus)).